The primary structure comprises 1864 residues: Nestin (1864 aa).

Methionine 1 is modified (N-acetylmethionine). Residues 1–7 are head; it reads MEGCVGE. The interval 8 to 43 is coil 1A; it reads ESFQMWELNRRLEAYLTRVKTLEEQNQLLSAELGGL. The IF rod domain maps to 8–314; it reads ESFQMWELNR…TLLEAENSRL (307 aa). The interval 44 to 55 is linker 1; it reads RAQSGDASWRAR. Positions 56-151 are coil 1B; sequence ADDELAALRV…ASHEEERAHL (96 aa). The segment at 152-174 is linker 12; that stretch reads NAQAACTPRRPPAPAHASPIRAP. The coil 2A stretch occupies residues 175-193; the sequence is EVEELARRLGEVWRGAVRD. The interval 194 to 196 is linker 2; it reads YQE. Residues 197-314 are coil 2B; the sequence is RVAHMESSLG…TLLEAENSRL (118 aa). Serine 312 carries the phosphoserine modification. The interval 315 to 1864 is tail; it reads QTPGRSSQAS…DGDSWSSGED (1550 aa). Position 316 is a phosphothreonine (threonine 316). Serine 356 and serine 359 each carry phosphoserine. A Phosphothreonine modification is found at threonine 389. 3 disordered regions span residues 437–492, 515–625, and 680–845; these read GVLP…EEEG, EIQE…MSPE, and KEDQ…LDEN. The span at 469 to 480 shows a compositional bias: basic and acidic residues; that stretch reads SILEAKDRESSE. A compositionally biased stretch (polar residues) spans 559 to 573; sequence KENCNSSIEENSGTV. 2 positions are modified to phosphoserine: serine 565 and serine 575. 2 stretches are compositionally biased toward basic and acidic residues: residues 575–598 and 609–618; these read SPEK…EKTL and LGEEEPRMED. Phosphoserine occurs at positions 623, 688, 731, 775, 841, 862, and 894. Composition is skewed to basic and acidic residues over residues 680 to 690, 698 to 732, 742 to 776, and 786 to 843; these read KEDQRFPRSPE, PLEK…LKSP, LLEK…LKSP, and LLEK…RSLD. 3 stretches are compositionally biased toward basic and acidic residues: residues 916–925, 947–965, and 978–1012; these read ILGSLEDRNG, QRIV…RSPE, and LEGE…KSLE. The disordered stretch occupies residues 916 to 1113; the sequence is ILGSLEDRNG…VKSSETENIE (198 aa). Serine 963, serine 1010, and serine 1021 each carry phosphoserine. Positions 1065 to 1090 are enriched in basic and acidic residues; sequence EKVDPELPKPLRNDQEVVRSLDKENQ. Phosphoserine is present on residues serine 1106 and serine 1127. Disordered stretches follow at residues 1129–1158, 1175–1344, 1375–1722, and 1735–1807; these read DTQE…LGCV, LRSL…DSVE, EAIH…DDGL, and ETVS…GLEQ. The span at 1133-1143 shows a compositional bias: polar residues; the sequence is PLWSTEVTSET. Phosphoserine occurs at positions 1177, 1188, and 1195. A compositionally biased stretch (basic and acidic residues) spans 1204–1213; the sequence is GPEREQHQES. Residue serine 1216 is modified to Phosphoserine. Over residues 1254–1273 the composition is skewed to basic and acidic residues; that stretch reads TEDKAELHLRGQGGEEKAVE. Serine 1290 is subject to Phosphoserine. Positions 1384 to 1405 are enriched in basic and acidic residues; it reads ESVKAKIDQGLEEPGKEPKEAG. Residues 1429–1440 are compositionally biased toward acidic residues; the sequence is ESGEGWGEEEAS. Residues 1514–1527 show a composition bias toward basic and acidic residues; it reads GRVEDEPEFGRGEI. Over residues 1532–1547 the composition is skewed to acidic residues; that stretch reads QDWEEGREDSEADELG. 2 positions are modified to phosphoserine: serine 1541 and serine 1565. The segment covering 1612–1621 has biased composition (acidic residues); sequence LSSEEFEDLG. Residues serine 1656 and serine 1665 each carry the phosphoserine modification. Residues 1658-1680 show a composition bias toward acidic residues; the sequence is GFADEEESGEEGEEEDADEEEGA. Positions 1703 to 1712 are enriched in basic and acidic residues; that stretch reads QRGDLEHESV. Composition is skewed to low complexity over residues 1713–1722 and 1741–1755; these read GDSGLWDDGL and SAEP…SASL. 2 positions are modified to phosphoserine: serine 1745 and serine 1747. Residues 1788 to 1797 show a composition bias toward polar residues; that stretch reads QGPNLESEQV. Phosphoserine occurs at positions 1837, 1860, and 1861. Positions 1841-1864 are disordered; sequence LGPSQPLKFTLSGVDGDSWSSGED.

This sequence belongs to the intermediate filament family. In terms of assembly, forms homodimers and homotetramers in vitro. In mixtures with other intermediate filament proteins such as vimentin and alpha-internexin, this protein preferentially forms heterodimers which can assemble to form intermediate filaments if nestin does not exceed 25%. Interacts with FHOD3. Constitutively phosphorylated. This increases during mitosis when the cytoplasmic intermediate filament network is reorganized.

Functionally, required for brain and eye development. Promotes the disassembly of phosphorylated vimentin intermediate filaments (IF) during mitosis and may play a role in the trafficking and distribution of IF proteins and other cellular factors to daughter cells during progenitor cell division. Required for survival, renewal and mitogen-stimulated proliferation of neural progenitor cells. The protein is Nestin (Nes) of Mus musculus (Mouse).